Reading from the N-terminus, the 448-residue chain is Nuclear distribution protein PAC1 (448 aa).

In terms of domain architecture, LisH spans 9–41 (QAEELHKSIIAYLAANNFQDSVTAMRTELNLGE). A disordered region spans residues 74–95 (SATPTSLSNRKQDPASWLPAGP). WD repeat units follow at residues 102 to 143 (SHRT…RTVK), 145 to 185 (HTKA…KNIR), 189 to 236 (GHDH…CLKT), 239 to 278 (GHSDWIRDVSPSLDGKYLLSTGNDRTLRLWDISMNTPETK), 283 to 343 (GHEH…IKTL), 345 to 384 (GHDNWVRSLVFHPSGKFLLSVSDDKTIRCWDLSQEGKCVK), and 389 to 444 (MHEH…TSLR).

The protein belongs to the WD repeat LIS1/nudF family. In terms of assembly, self-associates. Interacts with NDL1 and dynein.

It is found in the cytoplasm. It localises to the cytoskeleton. The protein resides in the spindle pole. Functionally, positively regulates the activity of the minus-end directed microtubule motor protein dynein. May enhance dynein-mediated microtubule sliding by targeting dynein to the microtubule plus end. Required for nuclear migration during vegetative growth as well as development. Required for retrograde early endosome (EE) transport from the hyphal tip. Required for localization of dynein to the mitotic spindle poles. Recruits additional proteins to the dynein complex at SPBs. The sequence is that of Nuclear distribution protein PAC1 from Fusarium vanettenii (strain ATCC MYA-4622 / CBS 123669 / FGSC 9596 / NRRL 45880 / 77-13-4) (Fusarium solani subsp. pisi).